A 201-amino-acid polypeptide reads, in one-letter code: ATP-dependent Clp protease proteolytic subunit 2 (201 aa).

Serine 98 (nucleophile) is an active-site residue. The active site involves histidine 123.

It belongs to the peptidase S14 family. Fourteen ClpP subunits assemble into 2 heptameric rings which stack back to back to give a disk-like structure with a central cavity, resembling the structure of eukaryotic proteasomes.

The protein resides in the cytoplasm. The enzyme catalyses Hydrolysis of proteins to small peptides in the presence of ATP and magnesium. alpha-casein is the usual test substrate. In the absence of ATP, only oligopeptides shorter than five residues are hydrolyzed (such as succinyl-Leu-Tyr-|-NHMec, and Leu-Tyr-Leu-|-Tyr-Trp, in which cleavage of the -Tyr-|-Leu- and -Tyr-|-Trp bonds also occurs).. Cleaves peptides in various proteins in a process that requires ATP hydrolysis. Has a chymotrypsin-like activity. Plays a major role in the degradation of misfolded proteins. The polypeptide is ATP-dependent Clp protease proteolytic subunit 2 (Pseudomonas aeruginosa (strain ATCC 15692 / DSM 22644 / CIP 104116 / JCM 14847 / LMG 12228 / 1C / PRS 101 / PAO1)).